We begin with the raw amino-acid sequence, 165 residues long: Large ribosomal subunit protein uL10 (165 aa).

This sequence belongs to the universal ribosomal protein uL10 family. In terms of assembly, part of the ribosomal stalk of the 50S ribosomal subunit. The N-terminus interacts with L11 and the large rRNA to form the base of the stalk. The C-terminus forms an elongated spine to which L12 dimers bind in a sequential fashion forming a multimeric L10(L12)X complex.

Functionally, forms part of the ribosomal stalk, playing a central role in the interaction of the ribosome with GTP-bound translation factors. The sequence is that of Large ribosomal subunit protein uL10 from Paraburkholderia phymatum (strain DSM 17167 / CIP 108236 / LMG 21445 / STM815) (Burkholderia phymatum).